A 452-amino-acid polypeptide reads, in one-letter code: Probable cytosolic iron-sulfur protein assembly protein 1 (452 aa).

Over residues 1 to 12 the composition is skewed to pro residues; sequence MPPPTTPTPNPS. Positions 1-24 are disordered; sequence MPPPTTPTPNPSIPQKATLTPLPP. WD repeat units follow at residues 70–121, 161–200, 213–267, 273–319, 340–379, and 411–452; these read GHAR…DAAA, GHEN…QGGD, EHDG…EWVC, GHGG…FGGV, VHTR…EDVA, and YEVN…VRIS.

It belongs to the WD repeat CIA1 family.

Essential component of the cytosolic iron-sulfur (Fe/S) protein assembly machinery. Required for the maturation of extramitochondrial Fe/S proteins. In Chaetomium globosum (strain ATCC 6205 / CBS 148.51 / DSM 1962 / NBRC 6347 / NRRL 1970) (Soil fungus), this protein is Probable cytosolic iron-sulfur protein assembly protein 1.